Here is a 310-residue protein sequence, read N- to C-terminus: Olfactory receptor 5T7 (310 aa).

Residues 1–23 (MENITEVTEFILMGFTDNADLEI) lie on the Extracellular side of the membrane. Residue N3 is glycosylated (N-linked (GlcNAc...) asparagine). The helical transmembrane segment at 24-44 (LSFFLFLAIYLFTLMGNLGLI) threads the bilayer. Residues 45–52 (TLVIGDSR) lie on the Cytoplasmic side of the membrane. Residues 53–73 (LHNPMYYFLSVLSSVDACYST) traverse the membrane as a helical segment. Topologically, residues 74 to 97 (VITPQMVVDFVSEKKVISFIGCAT) are extracellular. C95 and C187 are joined by a disulfide. The chain crosses the membrane as a helical span at residues 98-118 (QMFLAVTFGTTECFLLAAMAY). Over 119–131 (DRYVAIHNPLMYV) the chain is Cytoplasmic. Residues 132-152 (VSMSPRVYVPLIIASYAGGIL) form a helical membrane-spanning segment. At 153–194 (HAVIHTVATFRLSFCGSNKISHIFCDIPPLLAISCSDTHFNQ) the chain is on the extracellular side. Residues 195–215 (LLLFYCAGFIEVVTILIVLLS) form a helical membrane-spanning segment. The Cytoplasmic segment spans residues 216-235 (YGFILSVILKTRSTEGKRKV). A helical transmembrane segment spans residues 236–256 (FSTCGSHLMAVSTFHGTVLFM). Over 257–269 (YVRPSDSYALEHD) the chain is Extracellular. Residues 270–290 (MMVSIFYSIVIPMLNPLIYSL) form a helical membrane-spanning segment. Residues 291 to 310 (RNKDVKEAIKKVFGKRILCG) are Cytoplasmic-facing.

The protein belongs to the G-protein coupled receptor 1 family.

It is found in the cell membrane. Its function is as follows. Potential odorant receptor. In Mus musculus (Mouse), this protein is Olfactory receptor 5T7.